A 260-amino-acid polypeptide reads, in one-letter code: Indole-3-glycerol phosphate synthase (260 aa).

Belongs to the TrpC family.

The catalysed reaction is 1-(2-carboxyphenylamino)-1-deoxy-D-ribulose 5-phosphate + H(+) = (1S,2R)-1-C-(indol-3-yl)glycerol 3-phosphate + CO2 + H2O. Its pathway is amino-acid biosynthesis; L-tryptophan biosynthesis; L-tryptophan from chorismate: step 4/5. The polypeptide is Indole-3-glycerol phosphate synthase (Leifsonia xyli subsp. xyli (strain CTCB07)).